A 50-amino-acid chain; its full sequence is Large ribosomal subunit protein bL33 (50 aa).

Belongs to the bacterial ribosomal protein bL33 family.

The protein is Large ribosomal subunit protein bL33 of Fusobacterium nucleatum subsp. nucleatum (strain ATCC 25586 / DSM 15643 / BCRC 10681 / CIP 101130 / JCM 8532 / KCTC 2640 / LMG 13131 / VPI 4355).